A 155-amino-acid chain; its full sequence is Small ribosomal subunit protein uS7cz/uS7cy (155 aa).

As to quaternary structure, component of the chloroplast small ribosomal subunit (SSU). Mature 70S chloroplast ribosomes of higher plants consist of a small (30S) and a large (50S) subunit. The 30S small subunit contains 1 molecule of ribosomal RNA (16S rRNA) and 24 different proteins. The 50S large subunit contains 3 rRNA molecules (23S, 5S and 4.5S rRNA) and 33 different proteins.

The protein resides in the plastid. The protein localises to the chloroplast. Functionally, component of the chloroplast ribosome (chloro-ribosome), a dedicated translation machinery responsible for the synthesis of chloroplast genome-encoded proteins, including proteins of the transcription and translation machinery and components of the photosynthetic apparatus. The sequence is that of Small ribosomal subunit protein uS7cz/uS7cy (rps7-A) from Spinacia oleracea (Spinach).